The primary structure comprises 262 residues: Flap endonuclease Xni (262 aa).

Residue Asp-105 participates in Mg(2+) binding. Residues 162–257 enclose the 5'-3' exonuclease domain; the sequence is ERSQFLDLMA…FRVIDSPPEK (96 aa). K(+)-binding residues include Leu-172, Ala-173, Pro-181, Ile-183, and Ile-186. The interval 185–190 is interaction with DNA; the sequence is GIGPKS.

This sequence belongs to the Xni family. Mg(2+) serves as cofactor. Requires K(+) as cofactor.

Functionally, has flap endonuclease activity. During DNA replication, flap endonucleases cleave the 5'-overhanging flap structure that is generated by displacement synthesis when DNA polymerase encounters the 5'-end of a downstream Okazaki fragment. This chain is Flap endonuclease Xni, found in Shewanella baltica (strain OS155 / ATCC BAA-1091).